Consider the following 400-residue polypeptide: Phosphoribosylamine--glycine ligase (400 aa).

An ATP-grasp domain is found at 99 to 303; that stretch reads KRFMKKYGIR…FVNAVLEGYR (205 aa). Residue 125-186 coordinates ATP; the sequence is IKKFSPPYVI…DEFLAGNELS (62 aa). Mg(2+) is bound by residues E273 and N275.

This sequence belongs to the GARS family. The cofactor is Mg(2+). It depends on Mn(2+) as a cofactor.

The catalysed reaction is 5-phospho-beta-D-ribosylamine + glycine + ATP = N(1)-(5-phospho-beta-D-ribosyl)glycinamide + ADP + phosphate + H(+). The protein operates within purine metabolism; IMP biosynthesis via de novo pathway; N(1)-(5-phospho-D-ribosyl)glycinamide from 5-phospho-alpha-D-ribose 1-diphosphate: step 2/2. This is Phosphoribosylamine--glycine ligase from Thermotoga maritima (strain ATCC 43589 / DSM 3109 / JCM 10099 / NBRC 100826 / MSB8).